The primary structure comprises 116 residues: Large ribosomal subunit protein bL19 (116 aa).

Belongs to the bacterial ribosomal protein bL19 family.

Functionally, this protein is located at the 30S-50S ribosomal subunit interface and may play a role in the structure and function of the aminoacyl-tRNA binding site. The polypeptide is Large ribosomal subunit protein bL19 (Pseudomonas aeruginosa (strain LESB58)).